The sequence spans 370 residues: E3 ubiquitin-protein ligase E3D (370 aa).

A2 is modified (N-acetylalanine). A BRAT1-like motif motif is present at residues 129 to 159 (PLPSENWSALVGEWCCHPDPFANKPLHPREN). C144 lines the Zn(2+) pocket. The interaction with UBE2C stretch occupies residues 214–236 (QPSEGSFPNIPRSQFVQSVIARC). Residues 332 to 368 (LPSTTCLELLLILSRNNASLPLSLRQMNSFQLWCSHC) are HECT-like.

As to quaternary structure, interacts with UBE2C/UbcH10 (E2 ubiquitin-conjugating enzyme). In vitro, interacts with cyclin-B. In terms of processing, ubiquitinated by UBCH10 (E2 ubiquitin-conjugating enzyme).

Its subcellular location is the cytoplasm. The enzyme catalyses S-ubiquitinyl-[E2 ubiquitin-conjugating enzyme]-L-cysteine + [acceptor protein]-L-lysine = [E2 ubiquitin-conjugating enzyme]-L-cysteine + N(6)-ubiquitinyl-[acceptor protein]-L-lysine.. The protein operates within protein modification; protein ubiquitination. E3 ubiquitin-protein ligase which accepts ubiquitin from specific E2 ubiquitin-conjugating enzymes, and transfers it to substrates, generally promoting their degradation by the proteasome. Independently of its E3 ubiquitin-protein ligase activity, acts as an inhibitor of CPSF3 endonuclease activity by blocking CPSF3 active site. The protein is E3 ubiquitin-protein ligase E3D (Ube3d) of Rattus norvegicus (Rat).